A 248-amino-acid chain; its full sequence is Probable 2-oxo-3-(5-oxofuran-2-ylidene)propanoate lactonase (248 aa).

Catalysis depends on residues Cys-123, Asp-180, and His-212.

The protein belongs to the dienelactone hydrolase family.

The catalysed reaction is 2-oxo-3-(5-oxofuran-2-ylidene)propanoate + H2O = 3-maleylpyruvate + H(+). Involved in the 5-nitroanthranilic acid (5NAA) degradation. Catalyzes the hydrolysis of the lactone to produce maleylpyruvate biodegradation of 5-nitroanthranilate. In Bradyrhizobium sp, this protein is Probable 2-oxo-3-(5-oxofuran-2-ylidene)propanoate lactonase (naaC).